The primary structure comprises 1557 residues: ABC transporter atnG (1557 aa).

The next 5 helical transmembrane spans lie at 27 to 47 (FTLYFEEAFLSIFPAATLILA), 70 to 90 (LKLLLLAPYSISQLLLLAFWM), 99 to 119 (LTIASTVLRFIATLPCGYLIH), 131 to 151 (IISIYFLLTLLFDIPLARTIW), and 159 to 179 (VSAIFIAGTVVKALLLILETW). N-linked (GlcNAc...) asparagine glycans are attached at residues Asn-202 and Asn-249. A run of 6 helical transmembrane segments spans residues 256–276 (AGAMVVPIAKAFKWDLLAGVF), 311–331 (ATLLIGAYALVYGGIAIATAT), 385–405 (YIHDTWASLIEIGIALYLLYN), 412–432 (IAPIIIAFGCTVTAMKIAMMA), 490–510 (LLIAVVGLSNFNTLMTPIVSF), and 531–551 (LTSLTLFNLFAVFIGTLVESI). In terms of domain architecture, ABC transmembrane type-1 1 spans 279-556 (LCQSGFIISQ…LVESISETAM (278 aa)). The ABC transporter 1 domain occupies 593-829 (AFEVDVGWKN…LDYIQGFAIA (237 aa)). 625–632 (GAVGCGKT) is an ATP binding site. The N-linked (GlcNAc...) asparagine glycan is linked to Asn-667. Residues 882-902 (LVYFGLMAIFVFLQAFPTVWV) traverse the membrane as a helical segment. Residues 882-1162 (LVYFGLMAIF…LITDWTVLET (281 aa)) enclose the ABC transmembrane type-1 2 domain. An N-linked (GlcNAc...) asparagine glycan is attached at Asn-916. 4 consecutive transmembrane segments (helical) span residues 921-941 (IGVYWMFGVLGACFLLATACF), 996-1016 (AVLQTCLALFLCVAQLIIIAV), 1020-1040 (YITATIPLCVLVYCIIGTFYM), and 1105-1125 (LSLVLDMTVAGFVLVLMGIAV). The N-linked (GlcNAc...) asparagine glycan is linked to Asn-1132. Residues 1135-1155 (SLGLALVNVVSLSASVKALIT) form a helical membrane-spanning segment. The 233-residue stretch at 1199-1431 (VEYKNVSAFY…PSVFRELYKS (233 aa)) folds into the ABC transporter 2 domain. N-linked (GlcNAc...) asparagine glycans are attached at residues Asn-1203 and Asn-1218. 1233–1240 (GRSGSGKS) lines the ATP pocket. Disordered regions lie at residues 1439–1464 (ERQERAEAEARRRERVEKERAEEELR) and 1503–1557 (RTRS…RGLH). Residues 1507–1522 (RSRDHSAERRESKRYS) show a composition bias toward basic and acidic residues.

Belongs to the ABC transporter superfamily. ABCC family. Conjugate transporter (TC 3.A.1.208) subfamily.

It localises to the cell membrane. Its function is as follows. ABC transporter; part of the gene cluster that mediates the biosynthesis of aspercryptins, linear lipopeptides built from six amino acids including 2 highly unusual and nonproteogenic amino acids, 2-amino-octanoic acid (2aoa) and 2-amino-dodecanol (2adol). This chain is ABC transporter atnG, found in Emericella nidulans (strain FGSC A4 / ATCC 38163 / CBS 112.46 / NRRL 194 / M139) (Aspergillus nidulans).